The chain runs to 393 residues: NAD(P)H-quinone oxidoreductase subunit H 1 (393 aa).

The protein belongs to the complex I 49 kDa subunit family. NDH-1 can be composed of about 15 different subunits; different subcomplexes with different compositions have been identified which probably have different functions.

The protein resides in the cell inner membrane. The catalysed reaction is a plastoquinone + NADH + (n+1) H(+)(in) = a plastoquinol + NAD(+) + n H(+)(out). The enzyme catalyses a plastoquinone + NADPH + (n+1) H(+)(in) = a plastoquinol + NADP(+) + n H(+)(out). Its function is as follows. NDH-1 shuttles electrons from an unknown electron donor, via FMN and iron-sulfur (Fe-S) centers, to quinones in the respiratory and/or the photosynthetic chain. The immediate electron acceptor for the enzyme in this species is believed to be plastoquinone. Couples the redox reaction to proton translocation, and thus conserves the redox energy in a proton gradient. Cyanobacterial NDH-1 also plays a role in inorganic carbon-concentration. The chain is NAD(P)H-quinone oxidoreductase subunit H 1 from Gloeobacter violaceus (strain ATCC 29082 / PCC 7421).